Reading from the N-terminus, the 1014-residue chain is Endogenous retrovirus group K member 10 Pol protein (1014 aa).

The region spanning 57–245 (LEKGHIEPSF…TPFHYLGMQI (189 aa)) is the Reverse transcriptase domain. Positions 161–164 (LPQG) match the LPQG motif. The YXDD signature appears at 195–198 (YIDD). In terms of domain architecture, RNase H type-1 spans 460–590 (LENALTVFTD…ADLLVSSALI (131 aa)). Mg(2+) contacts are provided by Asp-469, Glu-497, Asp-517, and Asp-582. The Integrase-type zinc-finger motif lies at 587 to 628 (SALIKAQELHALTHVNAAGLKNKFDVTWKQAKDIVQHCTQCQ). Positions 596, 600, 624, and 627 each coordinate Zn(2+). One can recognise an Integrase catalytic domain in the interval 642 to 803 (RGLCPNALWQ…TSAEQHLTGK (162 aa)). Residues 811 to 859 (KLIWWKDNKNKTWEIGKVITWGRGFACVSPGENQLPVWLPTRHLKFYNE) constitute a DNA-binding region (integrase-type).

The protein belongs to the beta type-B retroviral polymerase family. HERV class-II K(HML-2) pol subfamily.

The catalysed reaction is DNA(n) + a 2'-deoxyribonucleoside 5'-triphosphate = DNA(n+1) + diphosphate. The enzyme catalyses Endonucleolytic cleavage to 5'-phosphomonoester.. Functionally, early post-infection, the reverse transcriptase converts the viral RNA genome into double-stranded viral DNA. The RNase H domain of the reverse transcriptase performs two functions. It degrades the RNA template and specifically removes the RNA primer from the RNA/DNA hybrid. Following nuclear import, the integrase catalyzes the insertion of the linear, double-stranded viral DNA into the host cell chromosome. Endogenous Pol proteins may have kept, lost or modified their original function during evolution. This is Endogenous retrovirus group K member 10 Pol protein (ERVK-10) from Homo sapiens (Human).